We begin with the raw amino-acid sequence, 72 residues long: Translation initiation factor IF-1 (72 aa).

In terms of domain architecture, S1-like spans 1–72 (MSKQDVIEVE…TRGRIVYRYK (72 aa)).

Belongs to the IF-1 family. As to quaternary structure, component of the 30S ribosomal translation pre-initiation complex which assembles on the 30S ribosome in the order IF-2 and IF-3, IF-1 and N-formylmethionyl-tRNA(fMet); mRNA recruitment can occur at any time during PIC assembly.

It localises to the cytoplasm. Functionally, one of the essential components for the initiation of protein synthesis. Stabilizes the binding of IF-2 and IF-3 on the 30S subunit to which N-formylmethionyl-tRNA(fMet) subsequently binds. Helps modulate mRNA selection, yielding the 30S pre-initiation complex (PIC). Upon addition of the 50S ribosomal subunit IF-1, IF-2 and IF-3 are released leaving the mature 70S translation initiation complex. This chain is Translation initiation factor IF-1, found in Pelotomaculum thermopropionicum (strain DSM 13744 / JCM 10971 / SI).